A 3210-amino-acid polypeptide reads, in one-letter code: PF 1022-synthetase (3210 aa).

The segment at 68-454 is condensation 1; that stretch reads VDDRRHAIGH…VKELDVVTAE (387 aa). The interval 483 to 876 is adenylation 1; the sequence is AGDPNKAAVF…GRKDSQVKIR (394 aa). One can recognise a Carrier 1 domain in the interval 1010–1086; it reads APATGIEVKL…GLVDVIGRDP (77 aa). Serine 1047 carries the post-translational modification O-(pantetheine 4'-phosphoryl)serine. The interval 1104–1534 is condensation 2; sequence SFAQGRLWFL…RTPIAVLPLT (431 aa). Residues 1563–2023 are adenylation 2; sequence FRKQVAAHPH…GRMDQQVKIR (461 aa). The interval 2081-2236 is S-adenosyl-L-methionine-dependent N-methyltransferase; that stretch reads EGWKDFFESN…YLLEVVESLV (156 aa). Carrier domains follow at residues 2570–2644 and 2668–2742; these read DPFV…RQGL and TPSD…RLTQ. O-(pantetheine 4'-phosphoryl)serine is present on residues serine 2604 and serine 2702. The interval 2788–3203 is condensation 3; it reads LDVYPATQMQ…KRMLEELCGN (416 aa). Positions 2976-3002 are disordered; it reads VIKGNNNTTPPPPPQQQSTPSGAHHAS.

The protein belongs to the NRP synthetase family. Requires pantetheine 4'-phosphate as cofactor.

It catalyses the reaction 2 (R)-3-phenyllactate + 2 (R)-lactate + 4 L-leucine + 4 S-adenosyl-L-methionine + 8 ATP = PF1022A + 8 AMP + 4 S-adenosyl-L-homocysteine + 8 diphosphate + 8 H(+). The catalysed reaction is 4 (R)-3-phenyllactate + 4 L-leucine + 4 S-adenosyl-L-methionine + 8 ATP = PF1022B + 8 AMP + 4 S-adenosyl-L-homocysteine + 8 diphosphate + 8 H(+). It carries out the reaction 3 (R)-3-phenyllactate + (R)-lactate + 4 L-leucine + 4 S-adenosyl-L-methionine + 8 ATP = PF1022C + 8 AMP + 4 S-adenosyl-L-homocysteine + 8 diphosphate + 8 H(+). The enzyme catalyses (R)-3-phenyllactate + 3 (R)-lactate + 4 L-leucine + 4 S-adenosyl-L-methionine + 8 ATP = PF1022D + 8 AMP + 4 S-adenosyl-L-homocysteine + 8 diphosphate + 8 H(+). It catalyses the reaction 4 (R)-lactate + 4 L-leucine + 4 S-adenosyl-L-methionine + 8 ATP = PF1022F + 8 AMP + 4 S-adenosyl-L-homocysteine + 8 diphosphate + 8 H(+). Nonribosomal peptide synthetase that synthesizes cyclooctadepsipeptides (CODPs) PF 1022 that show powerful broad-spectrum anthelmintic activity with low toxicity in animals. Couples 4 N-methyl-L-leucines and a varying content of alpha-D-hydroxy acids (D-lactates or D-phenyllactates) in an alternative fashion. The enzyme is capable of synthesizing all known natural cyclooctadepsipeptides of the PF1022 type differing in the content of D-lactate and D-phenyllactate, using from 4 D-lactates (PF 1022F) to 4 D-phenyllactates (PF 1022B), respectively. The formation of different PF-related compounds is mainly controlled by the molar ratio of the hydroxy acids. N-methylation of the substrate L-leucine takes place after covalent binding prior to peptide bond formation. This Rosellinia sp. (Mycelia sterilia) protein is PF 1022-synthetase.